Reading from the N-terminus, the 244-residue chain is Cell division protein ZapD (244 aa).

This sequence belongs to the ZapD family. In terms of assembly, interacts with FtsZ.

It is found in the cytoplasm. Functionally, cell division factor that enhances FtsZ-ring assembly. Directly interacts with FtsZ and promotes bundling of FtsZ protofilaments, with a reduction in FtsZ GTPase activity. The sequence is that of Cell division protein ZapD from Shewanella baltica (strain OS185).